Consider the following 340-residue polypeptide: Cytochrome c oxidase subunit 1 (340 aa).

The helical transmembrane segment at 18-38 (MCYLLVAILCGFLGYIYSLFI) threads the bilayer. Ca(2+) contacts are provided by glutamate 41 and glycine 46. Residues 42 to 62 (LSIIGCGVLFGDYQYYNVLVT) form a helical membrane-spanning segment. Residue histidine 64 coordinates Fe(II)-heme a. 7 helical membrane passes run 66–86 (LVMV…NYFV), 100–120 (LNNM…SGLL), 148–168 (FTVF…INLL), 186–206 (LFIW…PVLA), 237–257 (LFWF…FGLI), 279–299 (MILI…VVGM), and 305–325 (AYFG…LFNW). Histidine 243 contacts Cu cation. A cross-link (1'-histidyl-3'-tyrosine (His-Tyr)) is located at residues 243–247 (HPEVY). Tyrosine 247 contributes to the O2 binding site. The Cu cation site is built by histidine 292 and histidine 293.

This sequence belongs to the heme-copper respiratory oxidase family. As to quaternary structure, component of the cytochrome c oxidase (complex IV, CIV), a multisubunit enzyme composed of a catalytic core of 3 subunits and several supernumerary subunits. The complex exists as a monomer or a dimer and forms supercomplexes (SCs) in the inner mitochondrial membrane with ubiquinol-cytochrome c oxidoreductase (cytochrome b-c1 complex, complex III, CIII). Requires heme as cofactor. Cu cation is required as a cofactor.

The protein localises to the mitochondrion inner membrane. The catalysed reaction is 4 Fe(II)-[cytochrome c] + O2 + 8 H(+)(in) = 4 Fe(III)-[cytochrome c] + 2 H2O + 4 H(+)(out). It functions in the pathway energy metabolism; oxidative phosphorylation. In terms of biological role, component of the cytochrome c oxidase, the last enzyme in the mitochondrial electron transport chain which drives oxidative phosphorylation. The respiratory chain contains 3 multisubunit complexes succinate dehydrogenase (complex II, CII), ubiquinol-cytochrome c oxidoreductase (cytochrome b-c1 complex, complex III, CIII) and cytochrome c oxidase (complex IV, CIV), that cooperate to transfer electrons derived from NADH and succinate to molecular oxygen, creating an electrochemical gradient over the inner membrane that drives transmembrane transport and the ATP synthase. Cytochrome c oxidase is the component of the respiratory chain that catalyzes the reduction of oxygen to water. Electrons originating from reduced cytochrome c in the intermembrane space (IMS) are transferred via the dinuclear copper A center (CU(A)) of subunit 2 and heme A of subunit 1 to the active site in subunit 1, a binuclear center (BNC) formed by heme A3 and copper B (CU(B)). The BNC reduces molecular oxygen to 2 water molecules using 4 electrons from cytochrome c in the IMS and 4 protons from the mitochondrial matrix. The chain is Cytochrome c oxidase subunit 1 (COI) from Strigomonas oncopelti (Parasitic flagellate).